Reading from the N-terminus, the 71-residue chain is Permeability factor 2 (71 aa).

Disulfide bonds link C7–C33 and C9–C49.

Belongs to the intercrine alpha (chemokine CxC) family. As to quaternary structure, homodimer.

Its subcellular location is the secreted. In terms of biological role, has chemotactic activity for neutrophils. The chain is Permeability factor 2 from Oryctolagus cuniculus (Rabbit).